A 227-amino-acid chain; its full sequence is Phosphoglycolate phosphatase (227 aa).

Aspartate 11 serves as the catalytic Nucleophile. Residues aspartate 11 and aspartate 13 each contribute to the Mg(2+) site. Lysine 155 lines the substrate pocket. 2 residues coordinate Mg(2+): aspartate 178 and aspartate 182.

Belongs to the archaeal SPP-like hydrolase family. Mg(2+) is required as a cofactor.

The enzyme catalyses 2-phosphoglycolate + H2O = glycolate + phosphate. In terms of biological role, catalyzes the dephosphorylation of 2-phosphoglycolate. This is Phosphoglycolate phosphatase from Haloarcula marismortui (strain ATCC 43049 / DSM 3752 / JCM 8966 / VKM B-1809) (Halobacterium marismortui).